The sequence spans 199 residues: Ribonuclease HII (199 aa).

The region spanning 14 to 199 (GLLAGVDEAG…SFAPVAEVLR (186 aa)) is the RNase H type-2 domain. A divalent metal cation-binding residues include D20, E21, and D112.

It belongs to the RNase HII family. It depends on Mn(2+) as a cofactor. The cofactor is Mg(2+).

The protein localises to the cytoplasm. It catalyses the reaction Endonucleolytic cleavage to 5'-phosphomonoester.. Functionally, endonuclease that specifically degrades the RNA of RNA-DNA hybrids. The protein is Ribonuclease HII of Polaromonas sp. (strain JS666 / ATCC BAA-500).